The primary structure comprises 736 residues: Zinc finger CCCH domain-containing protein 14 (736 aa).

Methionine 1 is modified (N-acetylmethionine). Composition is skewed to polar residues over residues 77–103 (TTEP…SNFS) and 131–145 (VSTS…NVRQ). The tract at residues 77–145 (TTEPSSLKSS…QESKTTNVRQ (69 aa)) is disordered. Residue serine 85 is modified to Phosphoserine. Residues lysine 99, lysine 139, lysine 175, and lysine 198 each participate in a glycyl lysine isopeptide (Lys-Gly) (interchain with G-Cter in SUMO2) cross-link. A Phosphoserine modification is found at serine 240. A Glycyl lysine isopeptide (Lys-Gly) (interchain with G-Cter in SUMO2) cross-link involves residue lysine 245. Serine 281 is subject to Phosphoserine. Glycyl lysine isopeptide (Lys-Gly) (interchain with G-Cter in SUMO2) cross-links involve residues lysine 283 and lysine 295. The disordered stretch occupies residues 310–350 (HDGEEEEEDDDYGSRTGSISSSVSVPAKPERRPSLPPSKQA). Phosphoserine occurs at positions 327 and 343. N6-acetyllysine; alternate is present on lysine 357. Lysine 357 is covalently cross-linked (Glycyl lysine isopeptide (Lys-Gly) (interchain with G-Cter in SUMO2); alternate). Residue lysine 378 forms a Glycyl lysine isopeptide (Lys-Gly) (interchain with G-Cter in SUMO2) linkage. Phosphoserine occurs at positions 390 and 409. The interval 398-430 (VVQGQSRTPRISPPIKEEETKGDSVEKNQGTQQ) is disordered. Over residues 412–423 (IKEEETKGDSVE) the composition is skewed to basic and acidic residues. Lysine 413 participates in a covalent cross-link: Glycyl lysine isopeptide (Lys-Gly) (interchain with G-Cter in SUMO2). Residue serine 421 is modified to Phosphoserine. Residue lysine 489 forms a Glycyl lysine isopeptide (Lys-Gly) (interchain with G-Cter in SUMO2) linkage. Phosphoserine is present on residues serine 498, serine 515, serine 527, and serine 620. 5 C3H1-type zinc fingers span residues 595–620 (EKLL…HPIS), 621–640 (PCKA…VHPN), 641–656 (CKYD…PFTH), 682–699 (CRYF…YHPK), and 701–719 (CRFN…HPTI).

Belongs to the ZC3H14 family. Homodimer; facilitating circular RNAs (circRNAs) formation. Associates with the spliceosome. Interacts with HOOK2. Interacts with ZFC3H1 in a RNase-sensitive manner. Expressed in fetal and adult brain. Expressed in fetal and adult temporal lobe.

It is found in the nucleus speckle. The protein localises to the cytoplasm. Functionally, RNA-binding protein involved in the biogenesis of circular RNAs (circRNAs), which are produced by back-splicing circularization of pre-mRNAs. Acts by binding to both exon-intron boundary and 3'-UTR of pre-mRNAs to promote circRNA biogenesis through dimerization and the association with the spliceosome. Required for spermatogenesis via involvement in circRNA biogenesis. Regulates the pre-mRNA processing of ATP5MC1; preventing its degradation. Also binds the poly(A) tail of mRNAs; controlling poly(A) length in neuronal cells. The sequence is that of Zinc finger CCCH domain-containing protein 14 from Homo sapiens (Human).